The primary structure comprises 429 residues: Glutamate-1-semialdehyde 2,1-aminomutase (429 aa).

Position 265 is an N6-(pyridoxal phosphate)lysine (Lys265).

This sequence belongs to the class-III pyridoxal-phosphate-dependent aminotransferase family. HemL subfamily. In terms of assembly, homodimer. The cofactor is pyridoxal 5'-phosphate.

It localises to the cytoplasm. The catalysed reaction is (S)-4-amino-5-oxopentanoate = 5-aminolevulinate. The protein operates within porphyrin-containing compound metabolism; protoporphyrin-IX biosynthesis; 5-aminolevulinate from L-glutamyl-tRNA(Glu): step 2/2. The sequence is that of Glutamate-1-semialdehyde 2,1-aminomutase from Alkalilimnicola ehrlichii (strain ATCC BAA-1101 / DSM 17681 / MLHE-1).